A 432-amino-acid chain; its full sequence is D-amino acid dehydrogenase (432 aa).

3 to 17 contributes to the FAD binding site; that stretch reads VVILGSGVVGVTSAW.

Belongs to the DadA oxidoreductase family. FAD serves as cofactor.

It catalyses the reaction a D-alpha-amino acid + A + H2O = a 2-oxocarboxylate + AH2 + NH4(+). The protein operates within amino-acid degradation; D-alanine degradation; NH(3) and pyruvate from D-alanine: step 1/1. Functionally, oxidative deamination of D-amino acids. The polypeptide is D-amino acid dehydrogenase (Salmonella dublin (strain CT_02021853)).